Here is a 101-residue protein sequence, read N- to C-terminus: RNA-3 uncharacterized 11.6 kDa protein (101 aa).

The protein is RNA-3 uncharacterized 11.6 kDa protein of Beet necrotic yellow vein mosaic virus (isolate Yugoslavia/G1) (BNYVV).